Reading from the N-terminus, the 384-residue chain is NAD(P) transhydrogenase subunit alpha part 1 (384 aa).

The tract at residues 126 to 136 (PRISRAQSMDI) is RQD loop; involved in interaction with PntB. NAD(+)-binding positions include 127-129 (RIS), 132-135 (QSMD), 180-182 (VGV), 202-204 (DVR), glycine 234, glutamine 247, and leucine 266.

The protein belongs to the AlaDH/PNT family. As to quaternary structure, heterotrimer of two alpha chains and a beta (PntB) chain; in Rhodospirillum, the alpha chain is made of two subunits (PntAA and PntAB) and forms a dimer.

The catalysed reaction is NAD(+) + NADPH + H(+)(in) = NADH + NADP(+) + H(+)(out). Its function is as follows. The transhydrogenation between NADH and NADP is coupled to respiration and ATP hydrolysis and functions as a proton pump across the membrane. The chain is NAD(P) transhydrogenase subunit alpha part 1 (pntAA) from Rhodospirillum rubrum (strain ATCC 11170 / ATH 1.1.1 / DSM 467 / LMG 4362 / NCIMB 8255 / S1).